The primary structure comprises 178 residues: Putative RING-H2 finger protein ATL19 (178 aa).

The helical transmembrane segment at 11-31 (LISVLGLAVFIGLCILLVVLI) threads the bilayer. The RING-type; atypical zinc finger occupies 130 to 172 (CAICLSGYVVNEECRVFPVCRHIYHALCIDAWLKNHLTCPTCR).

This sequence belongs to the RING-type zinc finger family. ATL subfamily.

The protein resides in the membrane. It carries out the reaction S-ubiquitinyl-[E2 ubiquitin-conjugating enzyme]-L-cysteine + [acceptor protein]-L-lysine = [E2 ubiquitin-conjugating enzyme]-L-cysteine + N(6)-ubiquitinyl-[acceptor protein]-L-lysine.. It functions in the pathway protein modification; protein ubiquitination. The sequence is that of Putative RING-H2 finger protein ATL19 (ATL19) from Arabidopsis thaliana (Mouse-ear cress).